Here is a 339-residue protein sequence, read N- to C-terminus: Lipoate-protein ligase A (339 aa).

The region spanning 28 to 211 is the BPL/LPL catalytic domain; the sequence is NPDSHTLFLW…AFREYYRDTD (184 aa). Residues Arg-70, 75–78, and Lys-129 contribute to the ATP site; that span reads GAVF. Residue Lys-129 coordinates (R)-lipoate.

It belongs to the LplA family. As to quaternary structure, monomer.

The protein localises to the cytoplasm. The catalysed reaction is L-lysyl-[lipoyl-carrier protein] + (R)-lipoate + ATP = N(6)-[(R)-lipoyl]-L-lysyl-[lipoyl-carrier protein] + AMP + diphosphate + H(+). Its pathway is protein modification; protein lipoylation via exogenous pathway; protein N(6)-(lipoyl)lysine from lipoate: step 1/2. It functions in the pathway protein modification; protein lipoylation via exogenous pathway; protein N(6)-(lipoyl)lysine from lipoate: step 2/2. Functionally, catalyzes both the ATP-dependent activation of exogenously supplied lipoate to lipoyl-AMP and the transfer of the activated lipoyl onto the lipoyl domains of lipoate-dependent enzymes. This chain is Lipoate-protein ligase A, found in Psychrobacter cryohalolentis (strain ATCC BAA-1226 / DSM 17306 / VKM B-2378 / K5).